We begin with the raw amino-acid sequence, 115 residues long: Pro-FMRFamide-related neuropeptide FF (115 aa).

The first 22 residues, 1–22 (MDARQAAALLLVLLLVTDWSHA), serve as a signal peptide directing secretion. Disordered regions lie at residues 20-51 (SHAE…AQTP) and 78-102 (FGRN…LSSP). Positions 23-66 (EGPGGRDGGDQIFMEEDSGAHPAQDAQTPRSLLRSLLQAMQRPG) are excised as a propeptide. A Phenylalanine amide modification is found at F78. A propeptide spanning residues 81 to 94 (NTRGSWSNKRLSPR) is cleaved from the precursor. Residue F112 is modified to Phenylalanine amide.

Belongs to the FARP (FMRFamide related peptide) family.

The protein resides in the secreted. Its function is as follows. Morphine modulating peptides. Have wide-ranging physiologic effects, including the modulation of morphine-induced analgesia, elevation of arterial blood pressure, and increased somatostatin secretion from the pancreas. The neuropeptide FF potentiates and sensitizes ASIC3 cation channel. This chain is Pro-FMRFamide-related neuropeptide FF (NPFF), found in Bos taurus (Bovine).